Here is a 231-residue protein sequence, read N- to C-terminus: 7-cyano-7-deazaguanine synthase (231 aa).

ATP is bound at residue 8–18; that stretch reads FSGGQDSTTCL. Zn(2+) contacts are provided by C188, C197, C200, and C203.

Belongs to the QueC family. Requires Zn(2+) as cofactor.

It catalyses the reaction 7-carboxy-7-deazaguanine + NH4(+) + ATP = 7-cyano-7-deazaguanine + ADP + phosphate + H2O + H(+). The protein operates within purine metabolism; 7-cyano-7-deazaguanine biosynthesis. In terms of biological role, catalyzes the ATP-dependent conversion of 7-carboxy-7-deazaguanine (CDG) to 7-cyano-7-deazaguanine (preQ(0)). This Sodalis glossinidius (strain morsitans) protein is 7-cyano-7-deazaguanine synthase.